The primary structure comprises 196 residues: ATP-dependent Clp protease proteolytic subunit (196 aa).

Serine 96 functions as the Nucleophile in the catalytic mechanism. Residue histidine 121 is part of the active site.

It belongs to the peptidase S14 family. In terms of assembly, fourteen ClpP subunits assemble into 2 heptameric rings which stack back to back to give a disk-like structure with a central cavity, resembling the structure of eukaryotic proteasomes.

The protein localises to the cytoplasm. The enzyme catalyses Hydrolysis of proteins to small peptides in the presence of ATP and magnesium. alpha-casein is the usual test substrate. In the absence of ATP, only oligopeptides shorter than five residues are hydrolyzed (such as succinyl-Leu-Tyr-|-NHMec, and Leu-Tyr-Leu-|-Tyr-Trp, in which cleavage of the -Tyr-|-Leu- and -Tyr-|-Trp bonds also occurs).. Cleaves peptides in various proteins in a process that requires ATP hydrolysis. Has a chymotrypsin-like activity. Plays a major role in the degradation of misfolded proteins. The polypeptide is ATP-dependent Clp protease proteolytic subunit (Streptococcus pyogenes serotype M3 (strain SSI-1)).